Reading from the N-terminus, the 176-residue chain is MTNTGLVQSFSQIEPNVLGLETSVTSQICEGLNRALASFQVLYLQYQKHHFTVQGAEFYSLHEFFEDSYGSVKDHVHDLGERLNGLGGVPVAHPLKLAELTCFAIEEDGVFNCRTMLEHDLAAEQAILSLLRRLTAQVESLGDRATRYLLEGILLKTEERAYHIAHFLAPDSLKLA.

Belongs to the Dps family. Hexamer.

Involved in protection of chromosomal DNA from damage under nutrient-limited and oxidative stress conditions. Binds heme. The protein is Nutrient stress-induced DNA-binding protein (dpsA) of Synechococcus sp. (strain ATCC 27144 / PCC 6301 / SAUG 1402/1) (Anacystis nidulans).